A 667-amino-acid polypeptide reads, in one-letter code: Heat shock protein DDB_G0283913 (667 aa).

2 helical membrane passes run 2–22 (FVGT…KKIL) and 224–244 (MFIC…LNEL). Positions 18–82 (IKKILKRKKE…ELAKKLNCYI (65 aa)) form a coiled coil. The disordered stretch occupies residues 432–478 (IDDTIQDNDKSGSEVSTPTISSSSSSPLQPIIKDEKDDNIENKSDEA). Residues 444–457 (SEVSTPTISSSSSS) are compositionally biased toward low complexity. A compositionally biased stretch (basic and acidic residues) spans 463-477 (IKDEKDDNIENKSDE). The region spanning 551–667 (MVFSSGFKPF…VITFKFEKIG (117 aa)) is the sHSP domain.

This sequence belongs to the small heat shock protein (HSP20) family.

The protein localises to the membrane. This Dictyostelium discoideum (Social amoeba) protein is Heat shock protein DDB_G0283913.